We begin with the raw amino-acid sequence, 1873 residues long: Replicase polyprotein 1a (1873 aa).

Residues Cys-344 and His-393 each act as for leader protease activity in the active site. One can recognise an Alphavirus-like MT domain in the interval Ser-495–Leu-674. The tract at residues Val-1356–Glu-1381 is disordered. The (+)RNA virus helicase ATP-binding domain occupies Arg-1538–Asp-1705. One can recognise a (+)RNA virus helicase C-terminal domain in the interval Thr-1706–Leu-1873.

The catalysed reaction is ATP + H2O = ADP + phosphate + H(+). The chain is Replicase polyprotein 1a from Beta vulgaris (Sugar beet).